A 414-amino-acid chain; its full sequence is Gamma-glutamyl phosphate reductase (414 aa).

This sequence belongs to the gamma-glutamyl phosphate reductase family.

It is found in the cytoplasm. It carries out the reaction L-glutamate 5-semialdehyde + phosphate + NADP(+) = L-glutamyl 5-phosphate + NADPH + H(+). It participates in amino-acid biosynthesis; L-proline biosynthesis; L-glutamate 5-semialdehyde from L-glutamate: step 2/2. In terms of biological role, catalyzes the NADPH-dependent reduction of L-glutamate 5-phosphate into L-glutamate 5-semialdehyde and phosphate. The product spontaneously undergoes cyclization to form 1-pyrroline-5-carboxylate. The protein is Gamma-glutamyl phosphate reductase of Bacillus anthracis (strain A0248).